Reading from the N-terminus, the 353-residue chain is Photosystem II D2 protein (353 aa).

At Thr2 the chain carries N-acetylthreonine. Thr2 is modified (phosphothreonine). Residues 41-61 (CAYFAVGGWFTGTTFVTSWYT) traverse the membrane as a helical segment. His118 lines the chlorophyll a pocket. The chain crosses the membrane as a helical span at residues 125–141 (GFMLRQFELARSVQLRP). The pheophytin a site is built by Gln130 and Asn143. A helical membrane pass occupies residues 153-166 (VFVSVFLIYPLGQS). His198 is a chlorophyll a binding site. The chain crosses the membrane as a helical span at residues 208–228 (AALLCAIHGATVENTLFEDGD). Residues His215 and Phe262 each coordinate a plastoquinone. His215 contacts Fe cation. His269 lines the Fe cation pocket. A helical transmembrane segment spans residues 279–295 (GLWMSALGVVGLALNLR).

This sequence belongs to the reaction center PufL/M/PsbA/D family. In terms of assembly, PSII is composed of 1 copy each of membrane proteins PsbA, PsbB, PsbC, PsbD, PsbE, PsbF, PsbH, PsbI, PsbJ, PsbK, PsbL, PsbM, PsbT, PsbX, PsbY, PsbZ, Psb30/Ycf12, at least 3 peripheral proteins of the oxygen-evolving complex and a large number of cofactors. It forms dimeric complexes. The D1/D2 heterodimer binds P680, chlorophylls that are the primary electron donor of PSII, and subsequent electron acceptors. It shares a non-heme iron and each subunit binds pheophytin, quinone, additional chlorophylls, carotenoids and lipids. There is also a Cl(-1) ion associated with D1 and D2, which is required for oxygen evolution. The PSII complex binds additional chlorophylls, carotenoids and specific lipids. serves as cofactor.

It is found in the plastid. It localises to the chloroplast thylakoid membrane. It carries out the reaction 2 a plastoquinone + 4 hnu + 2 H2O = 2 a plastoquinol + O2. Its function is as follows. Photosystem II (PSII) is a light-driven water:plastoquinone oxidoreductase that uses light energy to abstract electrons from H(2)O, generating O(2) and a proton gradient subsequently used for ATP formation. It consists of a core antenna complex that captures photons, and an electron transfer chain that converts photonic excitation into a charge separation. The D1/D2 (PsbA/PsbD) reaction center heterodimer binds P680, the primary electron donor of PSII as well as several subsequent electron acceptors. D2 is needed for assembly of a stable PSII complex. The polypeptide is Photosystem II D2 protein (Jasminum nudiflorum (Winter jasmine)).